The following is a 130-amino-acid chain: Aspartate 1-decarboxylase (130 aa).

Residue S25 is the Schiff-base intermediate with substrate; via pyruvic acid of the active site. S25 is modified (pyruvic acid (Ser)). T57 contacts substrate. Y58 serves as the catalytic Proton donor. Residue 73–75 participates in substrate binding; it reads GAT.

The protein belongs to the PanD family. As to quaternary structure, heterooctamer of four alpha and four beta subunits. The cofactor is pyruvate. Is synthesized initially as an inactive proenzyme, which is activated by self-cleavage at a specific serine bond to produce a beta-subunit with a hydroxyl group at its C-terminus and an alpha-subunit with a pyruvoyl group at its N-terminus.

Its subcellular location is the cytoplasm. The catalysed reaction is L-aspartate + H(+) = beta-alanine + CO2. It participates in cofactor biosynthesis; (R)-pantothenate biosynthesis; beta-alanine from L-aspartate: step 1/1. Its function is as follows. Catalyzes the pyruvoyl-dependent decarboxylation of aspartate to produce beta-alanine. In Lactiplantibacillus plantarum (strain ATCC BAA-793 / NCIMB 8826 / WCFS1) (Lactobacillus plantarum), this protein is Aspartate 1-decarboxylase.